Consider the following 302-residue polypeptide: Putative cyclin-D6-1 (302 aa).

This sequence belongs to the cyclin family. Cyclin D subfamily.

The chain is Putative cyclin-D6-1 (CYCD6-1) from Arabidopsis thaliana (Mouse-ear cress).